The primary structure comprises 379 residues: Queuine tRNA-ribosyltransferase (379 aa).

The Proton acceptor role is filled by D94. Substrate is bound by residues 94–98 (DSGGF), D148, Q191, and G218. Residues 249-255 (GVGSPDS) are RNA binding. Residue D268 is the Nucleophile of the active site. Residues 273-277 (TRIAR) form an RNA binding; important for wobble base 34 recognition region. The Zn(2+) site is built by C306, C308, C311, and H337.

This sequence belongs to the queuine tRNA-ribosyltransferase family. Homodimer. Within each dimer, one monomer is responsible for RNA recognition and catalysis, while the other monomer binds to the replacement base PreQ1. Zn(2+) serves as cofactor.

The catalysed reaction is 7-aminomethyl-7-carbaguanine + guanosine(34) in tRNA = 7-aminomethyl-7-carbaguanosine(34) in tRNA + guanine. It participates in tRNA modification; tRNA-queuosine biosynthesis. In terms of biological role, catalyzes the base-exchange of a guanine (G) residue with the queuine precursor 7-aminomethyl-7-deazaguanine (PreQ1) at position 34 (anticodon wobble position) in tRNAs with GU(N) anticodons (tRNA-Asp, -Asn, -His and -Tyr). Catalysis occurs through a double-displacement mechanism. The nucleophile active site attacks the C1' of nucleotide 34 to detach the guanine base from the RNA, forming a covalent enzyme-RNA intermediate. The proton acceptor active site deprotonates the incoming PreQ1, allowing a nucleophilic attack on the C1' of the ribose to form the product. After dissociation, two additional enzymatic reactions on the tRNA convert PreQ1 to queuine (Q), resulting in the hypermodified nucleoside queuosine (7-(((4,5-cis-dihydroxy-2-cyclopenten-1-yl)amino)methyl)-7-deazaguanosine). This chain is Queuine tRNA-ribosyltransferase, found in Bacillus cereus (strain G9842).